A 150-amino-acid polypeptide reads, in one-letter code: Large ribosomal subunit protein uL11 (150 aa).

Belongs to the universal ribosomal protein uL11 family. Part of the ribosomal stalk of the 50S ribosomal subunit. Interacts with L10 and the large rRNA to form the base of the stalk. L10 forms an elongated spine to which L12 dimers bind in a sequential fashion forming a multimeric L10(L12)X complex. Post-translationally, one or more lysine residues are methylated.

Forms part of the ribosomal stalk which helps the ribosome interact with GTP-bound translation factors. This chain is Large ribosomal subunit protein uL11, found in Cereibacter sphaeroides (strain ATCC 17025 / ATH 2.4.3) (Rhodobacter sphaeroides).